Here is an 82-residue protein sequence, read N- to C-terminus: ATP synthase subunit c, chloroplastic (82 aa).

2 consecutive transmembrane segments (helical) span residues 3–23 (PIVAAASVVSAGLAVGLAAIG) and 57–77 (FAFMESLTIYGLVVALALLFA).

Belongs to the ATPase C chain family. In terms of assembly, F-type ATPases have 2 components, F(1) - the catalytic core - and F(0) - the membrane proton channel. F(1) has five subunits: alpha(3), beta(3), gamma(1), delta(1), epsilon(1). F(0) has four main subunits: a(1), b(1), b'(1) and c(10-14). The alpha and beta chains form an alternating ring which encloses part of the gamma chain. F(1) is attached to F(0) by a central stalk formed by the gamma and epsilon chains, while a peripheral stalk is formed by the delta, b and b' chains.

The protein localises to the plastid. It is found in the chloroplast thylakoid membrane. F(1)F(0) ATP synthase produces ATP from ADP in the presence of a proton or sodium gradient. F-type ATPases consist of two structural domains, F(1) containing the extramembraneous catalytic core and F(0) containing the membrane proton channel, linked together by a central stalk and a peripheral stalk. During catalysis, ATP synthesis in the catalytic domain of F(1) is coupled via a rotary mechanism of the central stalk subunits to proton translocation. Functionally, key component of the F(0) channel; it plays a direct role in translocation across the membrane. A homomeric c-ring of between 10-14 subunits forms the central stalk rotor element with the F(1) delta and epsilon subunits. The sequence is that of ATP synthase subunit c, chloroplastic from Tetradesmus obliquus (Green alga).